A 538-amino-acid chain; its full sequence is Chaperonin GroEL 1 (538 aa).

Residues 29–32 (TLGP), 86–90 (DGTTT), Gly-413, and Asp-494 each bind ATP.

The protein belongs to the chaperonin (HSP60) family. Forms a cylinder of 14 subunits composed of two heptameric rings stacked back-to-back. Interacts with the co-chaperonin GroES.

The protein localises to the cytoplasm. The enzyme catalyses ATP + H2O + a folded polypeptide = ADP + phosphate + an unfolded polypeptide.. Its function is as follows. Together with its co-chaperonin GroES, plays an essential role in assisting protein folding. The GroEL-GroES system forms a nano-cage that allows encapsulation of the non-native substrate proteins and provides a physical environment optimized to promote and accelerate protein folding. The protein is Chaperonin GroEL 1 of Mycolicibacterium paratuberculosis (strain ATCC BAA-968 / K-10) (Mycobacterium paratuberculosis).